The following is a 23-amino-acid chain: Large ribosomal subunit protein uL10 (23 aa).

The protein belongs to the universal ribosomal protein uL10 family. In terms of assembly, part of the ribosomal stalk of the 50S ribosomal subunit. The N-terminus interacts with L11 and the large rRNA to form the base of the stalk. The C-terminus forms an elongated spine to which L12 dimers bind in a sequential fashion forming a multimeric L10(L12)X complex.

Functionally, forms part of the ribosomal stalk, playing a central role in the interaction of the ribosome with GTP-bound translation factors. The polypeptide is Large ribosomal subunit protein uL10 (rplJ) (Klebsiella pneumoniae).